The primary structure comprises 2077 residues: Large tegument protein deneddylase (2077 aa).

Residues 1–231 form a deubiquitination activity region; that stretch reads MKIITSSTNQ…PDIAITLDKF (231 aa). Positions 3–221 constitute a Peptidase C76 domain; sequence IITSSTNQND…ELLILKTYKD (219 aa). Catalysis depends on residues cysteine 23, aspartate 156, and histidine 158. Position 287 (serine 287) is a region of interest, interaction with inner tegument protein.

This sequence belongs to the herpesviridae large tegument protein family. Interacts with host CUL1 and CUL4A; these interactions inhibit the E3 ligase activity of cullins. Interacts with inner tegument protein. Interacts with capsid vertex specific component CVC2. Interacts with the major capsid protein/MCP.

It localises to the virion tegument. The protein resides in the host cytoplasm. The protein localises to the host nucleus. It carries out the reaction Thiol-dependent hydrolysis of ester, thioester, amide, peptide and isopeptide bonds formed by the C-terminal Gly of ubiquitin (a 76-residue protein attached to proteins as an intracellular targeting signal).. Its function is as follows. Large tegument protein that plays multiple roles in the viral cycle. During viral entry, remains associated with the capsid while most of the tegument is detached and participates in the capsid transport toward the host nucleus. Plays a role in the routing of the capsid at the nuclear pore complex and subsequent uncoating. Within the host nucleus, acts as a deneddylase and promotes the degradation of nuclear CRLs (cullin-RING ubiquitin ligases) and thereby stabilizes nuclear CRL substrates, while cytoplasmic CRLs remain unaffected. These modifications prevent host cell cycle S-phase progression and create a favorable environment allowing efficient viral genome replication. Participates later in the secondary envelopment of capsids. Indeed, plays a linker role for the association of the outer viral tegument to the capsids together with the inner tegument protein. This chain is Large tegument protein deneddylase (U31), found in Homo sapiens (Human).